The sequence spans 114 residues: MRFLNNKHREKGLKAEEEACGFLKTLGFEMIERNFFSQFGEIDIIALKKGVLHFIEVKSGENFDPIYAITPSKLKKMIKTIRCYLSQKDPNSDFCIDALIVKNGKFELLENITF.

It belongs to the UPF0102 family.

This is UPF0102 protein jhp_0762 from Helicobacter pylori (strain J99 / ATCC 700824) (Campylobacter pylori J99).